The sequence spans 358 residues: Homoserine O-acetyltransferase (358 aa).

Residues 41–343 (NAVLICHALT…DYGHDAFLVD (303 aa)) form the AB hydrolase-1 domain. S143 acts as the Nucleophile in catalysis. R212 is a binding site for substrate. Active-site residues include D304 and H337. D338 contacts substrate.

This sequence belongs to the AB hydrolase superfamily. MetX family. In terms of assembly, homodimer.

It localises to the cytoplasm. It carries out the reaction L-homoserine + acetyl-CoA = O-acetyl-L-homoserine + CoA. It participates in amino-acid biosynthesis; L-methionine biosynthesis via de novo pathway; O-acetyl-L-homoserine from L-homoserine: step 1/1. In terms of biological role, transfers an acetyl group from acetyl-CoA to L-homoserine, forming acetyl-L-homoserine. The polypeptide is Homoserine O-acetyltransferase (Haemophilus influenzae (strain 86-028NP)).